The sequence spans 704 residues: Acetyl-coenzyme A synthetase 1 (704 aa).

CoA contacts are provided by residues 239-242 (RGGK) and threonine 358. ATP contacts are provided by residues 434–436 (GEP), 458–463 (DTYWQT), aspartate 550, and arginine 565. Residue serine 573 participates in CoA binding. Residue arginine 576 coordinates ATP. CoA is bound at residue arginine 641. A Microbody targeting signal motif is present at residues 702-704 (VKL).

It belongs to the ATP-dependent AMP-binding enzyme family.

It is found in the microsome. The protein resides in the endoplasmic reticulum. The catalysed reaction is acetate + ATP + CoA = acetyl-CoA + AMP + diphosphate. In Candida glabrata (strain ATCC 2001 / BCRC 20586 / JCM 3761 / NBRC 0622 / NRRL Y-65 / CBS 138) (Yeast), this protein is Acetyl-coenzyme A synthetase 1 (ACS1).